A 528-amino-acid chain; its full sequence is Peptide chain release factor 3 (528 aa).

One can recognise a tr-type G domain in the interval 10–278 (DKRRTFGIIS…TFVDLAPAPQ (269 aa)). GTP contacts are provided by residues 19-26 (SHPDAGKT), 87-91 (DTPGH), and 141-144 (NKLD).

It belongs to the TRAFAC class translation factor GTPase superfamily. Classic translation factor GTPase family. PrfC subfamily.

The protein localises to the cytoplasm. In terms of biological role, increases the formation of ribosomal termination complexes and stimulates activities of RF-1 and RF-2. It binds guanine nucleotides and has strong preference for UGA stop codons. It may interact directly with the ribosome. The stimulation of RF-1 and RF-2 is significantly reduced by GTP and GDP, but not by GMP. This is Peptide chain release factor 3 from Oleidesulfovibrio alaskensis (strain ATCC BAA-1058 / DSM 17464 / G20) (Desulfovibrio alaskensis).